The chain runs to 64 residues: Alpha-conotoxin-like Ai1.2 (64 aa).

The first 17 residues, M1–S17, serve as a signal peptide directing secretion. Residues T18 to R43 constitute a propeptide that is removed on maturation. Disulfide bonds link C46–C52 and C47–C60. Positions S48–P50 are ser-Xaa-Pro motif, crucial for potent interaction with nAChR. At G61 the chain carries Glycine amide.

The protein belongs to the conotoxin A superfamily. As to expression, expressed by the venom duct.

Its subcellular location is the secreted. In terms of biological role, alpha-conotoxins act on postsynaptic membranes, they bind to the nicotinic acetylcholine receptors (nAChR) and thus inhibit them. The protein is Alpha-conotoxin-like Ai1.2 of Conus ammiralis (Admiral cone).